The sequence spans 411 residues: tRNA (guanine(37)-N(1))-methyltransferase (411 aa).

S-adenosyl-L-methionine-binding positions include histidine 216, 254-255, 282-283, and asparagine 303; these read DL and DG. The interval 391 to 411 is disordered; the sequence is ERQASKQDDPKRRKVAAENAA.

This sequence belongs to the class I-like SAM-binding methyltransferase superfamily. TRM5/TYW2 family. As to quaternary structure, monomer.

It is found in the mitochondrion matrix. Its subcellular location is the nucleus. The protein localises to the cytoplasm. The enzyme catalyses guanosine(37) in tRNA + S-adenosyl-L-methionine = N(1)-methylguanosine(37) in tRNA + S-adenosyl-L-homocysteine + H(+). In terms of biological role, specifically methylates the N1 position of guanosine-37 in various cytoplasmic and mitochondrial tRNAs. Methylation is not dependent on the nature of the nucleoside 5' of the target nucleoside. This is the first step in the biosynthesis of wybutosine (yW), a modified base adjacent to the anticodon of tRNAs and required for accurate decoding. The protein is tRNA (guanine(37)-N(1))-methyltransferase of Phytophthora infestans (strain T30-4) (Potato late blight agent).